A 124-amino-acid polypeptide reads, in one-letter code: MELLQPSADAAPVPLPAFLDFTPNAAAKVAALIDAEGNPQLKLRLYVSGGGCSGFQYGFAFDDQVADDDLQVVTDGVTLLIDAMSRQYLAGARVDYEDGLEGSRFVIQNPNAQSTCGCGSSFSV.

Positions 52, 116, and 118 each coordinate iron-sulfur cluster.

The protein belongs to the HesB/IscA family. As to quaternary structure, homodimer. Requires iron-sulfur cluster as cofactor.

Required for insertion of 4Fe-4S clusters. This is Putative iron-sulfur cluster insertion protein ErpA 2 from Burkholderia vietnamiensis (strain G4 / LMG 22486) (Burkholderia cepacia (strain R1808)).